The sequence spans 156 residues: Small ribosomal subunit protein uS7 (156 aa).

It belongs to the universal ribosomal protein uS7 family. In terms of assembly, part of the 30S ribosomal subunit. Contacts proteins S9 and S11.

In terms of biological role, one of the primary rRNA binding proteins, it binds directly to 16S rRNA where it nucleates assembly of the head domain of the 30S subunit. Is located at the subunit interface close to the decoding center, probably blocks exit of the E-site tRNA. The protein is Small ribosomal subunit protein uS7 of Mycobacterium avium (strain 104).